We begin with the raw amino-acid sequence, 156 residues long: Arginine repressor (156 aa).

Belongs to the ArgR family.

It is found in the cytoplasm. Its pathway is amino-acid biosynthesis; L-arginine biosynthesis [regulation]. In terms of biological role, regulates arginine biosynthesis genes. In Klebsiella pneumoniae (strain 342), this protein is Arginine repressor.